Here is a 378-residue protein sequence, read N- to C-terminus: Pseudouridine kinase (378 aa).

Pseudouridine contacts are provided by residues D12, T26, 37–41, V38, N137, and K166; that span reads GVARN. Mg(2+) contacts are provided by S181 and T237. The ATP site is built by T237, G239, G242, T298, L306, and G310. Position 311 (D311) interacts with pseudouridine.

This sequence belongs to the carbohydrate kinase PfkB family. As to quaternary structure, forms homodimers.

The protein localises to the peroxisome. The catalysed reaction is pseudouridine + ATP = psi-UMP + ADP + H(+). Catalyzes the phosphorylation of pseudouridine to pseudouridine 5'-phosphate (PsiMP). Catalyzes the first step in a pseudouridine degradation pathway. Acts together with the pseudouridine 5'-phosphate glycosidase PUMY in the peroxisome to prevent toxic pseudouridine monophosphate accumulation. This chain is Pseudouridine kinase, found in Arabidopsis thaliana (Mouse-ear cress).